A 201-amino-acid polypeptide reads, in one-letter code: Molybdenum cofactor guanylyltransferase (201 aa).

Residues leucine 14 to glycine 16, lysine 31, and aspartate 104 each bind GTP. Residue aspartate 104 participates in Mg(2+) binding.

Belongs to the MobA family. As to quaternary structure, monomer. Requires Mg(2+) as cofactor.

Its subcellular location is the cytoplasm. It carries out the reaction Mo-molybdopterin + GTP + H(+) = Mo-molybdopterin guanine dinucleotide + diphosphate. Functionally, transfers a GMP moiety from GTP to Mo-molybdopterin (Mo-MPT) cofactor (Moco or molybdenum cofactor) to form Mo-molybdopterin guanine dinucleotide (Mo-MGD) cofactor. The protein is Molybdenum cofactor guanylyltransferase of Helicobacter pylori (strain ATCC 700392 / 26695) (Campylobacter pylori).